The primary structure comprises 431 residues: Glutamate-1-semialdehyde 2,1-aminomutase (431 aa).

An N6-(pyridoxal phosphate)lysine modification is found at K269.

This sequence belongs to the class-III pyridoxal-phosphate-dependent aminotransferase family. HemL subfamily. Homodimer. Pyridoxal 5'-phosphate serves as cofactor.

It localises to the cytoplasm. The catalysed reaction is (S)-4-amino-5-oxopentanoate = 5-aminolevulinate. Its pathway is porphyrin-containing compound metabolism; protoporphyrin-IX biosynthesis; 5-aminolevulinate from L-glutamyl-tRNA(Glu): step 2/2. This Francisella tularensis subsp. mediasiatica (strain FSC147) protein is Glutamate-1-semialdehyde 2,1-aminomutase.